Consider the following 351-residue polypeptide: Biotin synthase (351 aa).

Positions 44-262 constitute a Radical SAM core domain; that stretch reads NRVQVSTLLS…LAVARILMPQ (219 aa). Positions 59, 63, and 66 each coordinate [4Fe-4S] cluster. [2Fe-2S] cluster-binding residues include Cys103, Cys134, Cys194, and Arg266.

Belongs to the radical SAM superfamily. Biotin synthase family. In terms of assembly, homodimer. [4Fe-4S] cluster serves as cofactor. It depends on [2Fe-2S] cluster as a cofactor.

It catalyses the reaction (4R,5S)-dethiobiotin + (sulfur carrier)-SH + 2 reduced [2Fe-2S]-[ferredoxin] + 2 S-adenosyl-L-methionine = (sulfur carrier)-H + biotin + 2 5'-deoxyadenosine + 2 L-methionine + 2 oxidized [2Fe-2S]-[ferredoxin]. It participates in cofactor biosynthesis; biotin biosynthesis; biotin from 7,8-diaminononanoate: step 2/2. Functionally, catalyzes the conversion of dethiobiotin (DTB) to biotin by the insertion of a sulfur atom into dethiobiotin via a radical-based mechanism. The chain is Biotin synthase from Pseudomonas fluorescens (strain Pf0-1).